Here is a 294-residue protein sequence, read N- to C-terminus: dTDP-4-dehydrorhamnose reductase (294 aa).

Residues 11-13, 38-39, and 62-64 each bind NADH; these read GQL, DI, and AYT. NADPH-binding positions include 12–13, 38–39, and 62–64; these read QL, DI, and AYT. A dTDP-beta-L-rhamnose-binding site is contributed by 103–104; the sequence is TD. NADH is bound by residues Tyr-127 and Lys-131. Residues Tyr-127 and Lys-131 each contribute to the NADPH site. The active-site Proton donor/acceptor is the Tyr-127. Trp-152 lines the dTDP-beta-L-rhamnose pocket.

This sequence belongs to the dTDP-4-dehydrorhamnose reductase family. As to quaternary structure, homodimer. Mg(2+) serves as cofactor.

The catalysed reaction is dTDP-beta-L-rhamnose + NADP(+) = dTDP-4-dehydro-beta-L-rhamnose + NADPH + H(+). It participates in carbohydrate biosynthesis; dTDP-L-rhamnose biosynthesis. The protein operates within bacterial outer membrane biogenesis; LPS O-antigen biosynthesis. Involved in the biosynthesis of the dTDP-L-rhamnose which is an important component of lipopolysaccharide (LPS). Catalyzes the reduction of dTDP-6-deoxy-L-lyxo-4-hexulose to yield dTDP-L-rhamnose. The polypeptide is dTDP-4-dehydrorhamnose reductase (Aggregatibacter actinomycetemcomitans (Actinobacillus actinomycetemcomitans)).